The chain runs to 457 residues: DNA repair protein RadA (457 aa).

A C4-type zinc finger spans residues 12–29; it reads CQACGYESAKWMGKCPNC. 97-104 serves as a coordination point for ATP; it reads GDPGIGKS. The short motif at 254–258 is the RadA KNRFG motif element; that stretch reads KNRFG. Residues 353–457 form a lon-protease-like region; that stretch reads DAYLKAAGGV…GEALKKALPD (105 aa).

It belongs to the RecA family. RadA subfamily.

Functionally, DNA-dependent ATPase involved in processing of recombination intermediates, plays a role in repairing DNA breaks. Stimulates the branch migration of RecA-mediated strand transfer reactions, allowing the 3' invading strand to extend heteroduplex DNA faster. Binds ssDNA in the presence of ADP but not other nucleotides, has ATPase activity that is stimulated by ssDNA and various branched DNA structures, but inhibited by SSB. Does not have RecA's homology-searching function. This Listeria monocytogenes serovar 1/2a (strain ATCC BAA-679 / EGD-e) protein is DNA repair protein RadA.